We begin with the raw amino-acid sequence, 384 residues long: 23S rRNA (uracil(747)-C(5))-methyltransferase RlmC (384 aa).

Residues Cys-7, Cys-15, Cys-18, and Cys-94 each coordinate [4Fe-4S] cluster. S-adenosyl-L-methionine-binding residues include Gln-219, Phe-248, Glu-269, and Asn-316. Cys-343 (nucleophile) is an active-site residue.

The protein belongs to the class I-like SAM-binding methyltransferase superfamily. RNA M5U methyltransferase family. RlmC subfamily.

It catalyses the reaction uridine(747) in 23S rRNA + S-adenosyl-L-methionine = 5-methyluridine(747) in 23S rRNA + S-adenosyl-L-homocysteine + H(+). Its function is as follows. Catalyzes the formation of 5-methyl-uridine at position 747 (m5U747) in 23S rRNA. The chain is 23S rRNA (uracil(747)-C(5))-methyltransferase RlmC from Shewanella sp. (strain MR-7).